Consider the following 565-residue polypeptide: Frizzled-2 (565 aa).

The N-terminal stretch at 1–23 is a signal peptide; that stretch reads MRPRSALPRLLLPLLLLPAAGPA. Topologically, residues 24-247 are extracellular; it reads QFHGEKGISI…QEETRFARLW (224 aa). The region spanning 34 to 153 is the FZ domain; that stretch reads PDHGFCQPIS…HGAEQICVGQ (120 aa). 5 cysteine pairs are disulfide-bonded: Cys39–Cys100, Cys47–Cys93, Cys84–Cys121, Cys110–Cys150, and Cys114–Cys138. N-linked (GlcNAc...) asparagine glycosylation occurs at Asn53. Asn154 carries N-linked (GlcNAc...) asparagine glycosylation. The interval 160 to 189 is disordered; that stretch reads APALLTTAPPPGLQPGAGGTPGGPGGGGAP. The segment covering 174–188 has biased composition (gly residues); it reads PGAGGTPGGPGGGGA. A helical transmembrane segment spans residues 248–268; that stretch reads ILTWSVLCCASTFFTVTTYLV. Residues 269-279 lie on the Cytoplasmic side of the membrane; sequence DMQRFRYPERP. Residues 280–300 form a helical membrane-spanning segment; that stretch reads IIFLSGCYTMVSVAYIAGFVL. Over 301 to 327 the chain is Extracellular; it reads QERVVCNERFSEDGYRTVVQGTKKEGC. Residues 328 to 348 form a helical membrane-spanning segment; it reads TILFMMLYFFSMASSIWWVIL. At 349–370 the chain is on the cytoplasmic side; it reads SLTWFLAAGMKWGHEAIEANSQ. Residues 371–391 traverse the membrane as a helical segment; sequence YFHLAAWAVPAVKTITILAMG. At 392-414 the chain is on the extracellular side; sequence QIDGDLLSGVCFVGLNSLDPLRG. The chain crosses the membrane as a helical span at residues 415–435; sequence FVLAPLFVYLFIGTSFLLAGF. Topologically, residues 436-461 are cytoplasmic; the sequence is VSLFRIRTIMKHDGTKTEKLERLMVR. The chain crosses the membrane as a helical span at residues 462-482; sequence IGVFSVLYTVPATIVIACYFY. The Extracellular portion of the chain corresponds to 483–519; it reads EQAFREHWERSWVSQHCKSLAIPCPAHYTPRMSPDFT. Residues 520–540 form a helical membrane-spanning segment; the sequence is VYMIKYLMTLIVGITSGFWIW. Over 541-565 the chain is Cytoplasmic; that stretch reads SGKTLHSWRKFYTRLTNSRHGETTV. The Lys-Thr-X-X-X-Trp motif, mediates interaction with the PDZ domain of Dvl family members motif lies at 543-548; sequence KTLHSW. Residues 563-565 carry the PDZ-binding motif; the sequence is TTV.

The protein belongs to the G-protein coupled receptor Fz/Smo family. As to quaternary structure, (Microbial infection) Interacts with C.difficile toxin TcdB; frizzled receptors constitute the major host receptors for TcdB in the colonic epithelium. Post-translationally, ubiquitinated by ZNRF3, leading to its degradation by the proteasome. In terms of tissue distribution, widely expressed. In the adult, mainly found in heart, placenta, skeletal muscle, lung, kidney, pancreas, prostate, testis, ovary and colon. In the fetus, expressed in brain, lung and kidney. Low levels in fetal liver.

It localises to the membrane. The protein resides in the cell membrane. Functionally, receptor for Wnt proteins. Most of frizzled receptors are coupled to the beta-catenin canonical signaling pathway, which leads to the activation of disheveled proteins, inhibition of GSK-3 kinase, nuclear accumulation of beta-catenin and activation of Wnt target genes. A second signaling pathway involving PKC and calcium fluxes has been seen for some family members, but it is not yet clear if it represents a distinct pathway or if it can be integrated in the canonical pathway, as PKC seems to be required for Wnt-mediated inactivation of GSK-3 kinase. Both pathways seem to involve interactions with G-proteins. May be involved in transduction and intercellular transmission of polarity information during tissue morphogenesis and/or in differentiated tissues. (Microbial infection) Acts as a receptor for C.difficile toxin TcdB in the colonic epithelium. TcdB occupies the binding site for Wnt-adducted palmitoleate in frizzled receptors and TcdB-binding prevents Wnt-binding and downstream Wnt signaling. The protein is Frizzled-2 (FZD2) of Homo sapiens (Human).